A 756-amino-acid polypeptide reads, in one-letter code: ATP-dependent DNA helicase Hel308 (756 aa).

ATP-binding positions include Q29 and 47–54; that span reads SATASGKT. Positions 34–201 constitute a Helicase ATP-binding domain; that stretch reads RAGLLNGENI…WLNAKLVKSD (168 aa). Positions 146 to 149 match the DEAH box motif; it reads DEIH. One can recognise a Helicase C-terminal domain in the interval 233-435; it reads SLINLTVDTL…PTSLKFHTLS (203 aa).

It belongs to the helicase family. Hel308 subfamily. In terms of assembly, monomer.

The enzyme catalyses Couples ATP hydrolysis with the unwinding of duplex DNA by translocating in the 3'-5' direction.. It carries out the reaction ATP + H2O = ADP + phosphate + H(+). In terms of biological role, DNA-dependent ATPase and 3'-5' DNA helicase that may be involved in repair of stalled replication forks. The polypeptide is ATP-dependent DNA helicase Hel308 (Caldivirga maquilingensis (strain ATCC 700844 / DSM 13496 / JCM 10307 / IC-167)).